The primary structure comprises 395 residues: Phosphoprotein (395 aa).

Polar residues predominate over residues 143–157; the sequence is FSSGPSLTDQASSKD. The disordered stretch occupies residues 143–183; sequence FSSGPSLTDQASSKDPNFKRGGEKLTDATKADIGGSGASPG. The span at 158-172 shows a compositional bias: basic and acidic residues; sequence PNFKRGGEKLTDATK. The multimerization stretch occupies residues 220-283; the sequence is ENVKEIIEIL…MTTMKIMDPS (64 aa).

It belongs to the rubulavirus/avulavirus P protein family. As to quaternary structure, homotetramer. Interacts (via multimerization domain) with polymerase L; this interaction forms the polymerase L-P complex. Interacts (via N-terminus) with N0 (via Ncore); this interaction allows P to chaperon N0 to avoid N polymerization before encapsidation. Interacts (via C-terminus) with N-RNA template; this interaction positions the polymerase on the template for both transcription and replication.

Functionally, essential cofactor of the RNA polymerase L that plays a central role in the transcription and replication by forming the polymerase complex with RNA polymerase L and recruiting L to the genomic N-RNA template for RNA synthesis. Also plays a central role in the encapsidation of nascent RNA chains by forming the encapsidation complex with the nucleocapsid protein N (N-P complex). Acts as a chaperone for newly synthesized free N protein, so-called N0, allowing encapsidation of nascent RNA chains during replication. The nucleoprotein protein N prevents excessive phosphorylation of P, which leads to down-regulation of viral transcription/ replication. Participates, together with N, in the formation of viral factories (viroplasms), which are large inclusions in the host cytoplasm where replication takes place. The chain is Phosphoprotein (P/V) from Simian virus 41 (SV41).